A 482-amino-acid chain; its full sequence is Lipoamide acyltransferase component of branched-chain alpha-keto acid dehydrogenase complex, mitochondrial (482 aa).

The transit peptide at 1 to 61 directs the protein to the mitochondrion; the sequence is MAAARVLRTW…HSLRTAAVLQ (61 aa). The region spanning 64 to 139 is the Lipoyl-binding domain; that stretch reads VVQFKLSDIG…YVGKPLIDIE (76 aa). Position 105 is an N6-lipoyllysine (lysine 105). Lysine 133 carries the post-translational modification N6-succinyllysine. Residues 145–160 form a critical for association with PPM1K region; sequence DSEEDVVETPAVSHDE. Residues 172–209 enclose the Peripheral subunit-binding (PSBD) domain; it reads LATPAVRRLAMENNIKLSEVVGSGKDGRILKEDILSFL. Lysine 196 is subject to N6-acetyllysine; alternate. Lysine 196 carries the post-translational modification N6-succinyllysine; alternate. Lysine 202 is modified (N6-acetyllysine). Residues 217 to 252 are disordered; it reads LPPSPKSEITPPPPQPKDRTFPTPIAKPPVFTGKDR. The segment covering 218 to 231 has biased composition (pro residues); the sequence is PPSPKSEITPPPPQ. Serine 220 bears the Phosphoserine mark. Lysine 243 and lysine 250 each carry N6-acetyllysine. N6-succinyllysine is present on lysine 261. At lysine 289 the chain carries N6-acetyllysine; alternate. N6-succinyllysine; alternate is present on lysine 289. Arginine 291 is a binding site for CoA. 2 positions are modified to N6-acetyllysine: lysine 295 and lysine 304. Residues serine 306, aspartate 349, glutamine 378, serine 399, asparagine 400, serine 403, glycine 424, and isoleucine 426 each contribute to the CoA site. N6-acetyllysine is present on lysine 435. Lysine 440 is modified (N6-acetyllysine; alternate). Lysine 440 bears the N6-succinyllysine; alternate mark. Active-site residues include histidine 452 and aspartate 456.

Belongs to the 2-oxoacid dehydrogenase family. Forms a 24-polypeptide structural core with octahedral symmetry that represents the E2 component of the branched-chain alpha-ketoacid dehydrogenase (BCKDH) complex. The BCKDH complex is composed of three major building blocks E1, E2 and E3. It is organized around E2, a 24-meric cubic core composed of DBT, to which are associated 6 to 12 copies of E1, and approximately 6 copies of the dehydrogenase E3, a DLD dimer. Interacts with PPM1K with a 24:1 stoichiometry; the N-terminal region (residues 49-61) of PPM1K and C-terminal linker of the lipoyl domain of DBT/E2 (residues 145-160) are critical for this interaction whereas the lipoyl prosthetic group is dispensable. This interaction requires colocalization in mitochondria. PPM1K competes with BCKDK for binding to DBT; this interaction is modulated by branched-chain alpha-keto acids (BCKAs). At steady state, BCKDH holoenzyme preferentially binds BCKDK and BCKDHA is phosphorylated. In response to high levels of BCKAs, BCKDK is replaced by PPM1K leading to BCKDHA dephosphorylation. The cofactor is (R)-lipoate.

The protein localises to the mitochondrion matrix. The enzyme catalyses N(6)-[(R)-dihydrolipoyl]-L-lysyl-[protein] + 2-methylpropanoyl-CoA = N(6)-[(R)-S(8)-2-methylpropanoyldihydrolipoyl]-L-lysyl-[protein] + CoA. The branched-chain alpha-keto dehydrogenase complex catalyzes the overall conversion of alpha-keto acids to acyl-CoA and CO(2). It contains multiple copies of three enzymatic components: branched-chain alpha-keto acid decarboxylase (E1), lipoamide acyltransferase (E2) and lipoamide dehydrogenase (E3). Within this complex, the catalytic function of this enzyme is to accept, and to transfer to coenzyme A, acyl groups that are generated by the branched-chain alpha-keto acid decarboxylase component. This chain is Lipoamide acyltransferase component of branched-chain alpha-keto acid dehydrogenase complex, mitochondrial (Dbt), found in Mus musculus (Mouse).